The following is a 255-amino-acid chain: Glutamate racemase (255 aa).

Residues 7-8 (DS) and 39-40 (YG) each bind substrate. The active-site Proton donor/acceptor is cysteine 70. A substrate-binding site is contributed by 71–72 (NT). The active-site Proton donor/acceptor is cysteine 181. 182–183 (TH) is a binding site for substrate.

It belongs to the aspartate/glutamate racemases family.

The catalysed reaction is L-glutamate = D-glutamate. The protein operates within cell wall biogenesis; peptidoglycan biosynthesis. Provides the (R)-glutamate required for cell wall biosynthesis. The polypeptide is Glutamate racemase (Helicobacter pylori (strain ATCC 700392 / 26695) (Campylobacter pylori)).